A 168-amino-acid chain; its full sequence is Prespore-specific protein A (168 aa).

The N-terminal stretch at methionine 1–alanine 19 is a signal peptide. O-linked (GlcNAc) threonine glycosylation is found at threonine 110, threonine 114, threonine 116, threonine 118, threonine 120, threonine 122, threonine 124, threonine 126, threonine 128, threonine 130, threonine 132, threonine 134, and threonine 138. Repeat copies occupy residues threonine 116 to valine 119, threonine 120 to valine 123, and threonine 124 to valine 127. The interval threonine 116–valine 127 is 3 X 4 AA tandem repeats of T-P-T-V. The segment covering threonine 116–proline 131 has biased composition (low complexity). The tract at residues threonine 116–glycine 147 is disordered. O-linked (GlcNAc) serine glycosylation is present at serine 140. A lipid anchor (GPI-like-anchor amidated glycine) is attached at glycine 147. Residues serine 148–cysteine 168 constitute a propeptide, removed in mature form.

Belongs to the ponticulin family. O-glycosylated in the repeat region. The oligosaccharides contain N-acetylglucosamine and fucose as the major constituents. Post-translationally, the GPI-like-anchor contains a phosphoceramide group, rather than a phosphatidyl group.

The protein localises to the cell membrane. May bind F-actin and nucleates actin assembly. This chain is Prespore-specific protein A (pspA), found in Dictyostelium discoideum (Social amoeba).